We begin with the raw amino-acid sequence, 1233 residues long: ATP-dependent helicase/nuclease subunit A (1233 aa).

Residues 3 to 474 (TKWTEEQKQA…ILLYKNFRSR (472 aa)) form the UvrD-like helicase ATP-binding domain. ATP is bound at residue 24–31 (AAAGSGKT). In terms of domain architecture, UvrD-like helicase C-terminal spans 518–809 (VTGGAVELHL…RIMSIHKSKG (292 aa)). The tract at residues 533–555 (VEEEVEEKEEEKNEEKDFEEEEE) is disordered.

This sequence belongs to the helicase family. AddA subfamily. Heterodimer of AddA and AddB/RexB. Requires Mg(2+) as cofactor.

The enzyme catalyses Couples ATP hydrolysis with the unwinding of duplex DNA by translocating in the 3'-5' direction.. It carries out the reaction ATP + H2O = ADP + phosphate + H(+). Its function is as follows. The heterodimer acts as both an ATP-dependent DNA helicase and an ATP-dependent, dual-direction single-stranded exonuclease. Recognizes the chi site generating a DNA molecule suitable for the initiation of homologous recombination. The AddA nuclease domain is required for chi fragment generation; this subunit has the helicase and 3' -&gt; 5' nuclease activities. This Thermoanaerobacter sp. (strain X514) protein is ATP-dependent helicase/nuclease subunit A.